The primary structure comprises 423 residues: TPR repeat-containing protein YpiA (423 aa).

TPR repeat units follow at residues 33-66 (DEDK…YPNE), 67-100 (TELT…DPSY), 135-168 (PVID…QSEI), 171-204 (VNVH…NPDP), 238-271 (TSLY…DEYN), 272-305 (KELF…DPGF), 306-339 (VEAL…GEED), 340-373 (PKYN…YRED), and 374-407 (RDFL…DGAN).

Interacts with the RNA polymerase core.

The protein is TPR repeat-containing protein YpiA (ypiA) of Bacillus subtilis (strain 168).